The chain runs to 1242 residues: MEPLRPQITYGPIETVDNEELTEADMLSFISAAVNSTGLIGYNIKSFDDLMDNGIPQIVKQMFNVDITYKDQRDHTEIDKLRESVQIQFNFTDVNIERPQHRNYSQGNKINLLPNKARLCGLSYSGPVNLAAEVILTAHYSNGRQEVKRASIPPFQVSTFPIMRGSNRCHTHHLSKTAKKEIGEDPNEPGGYFIARGGEWVVDLLENIRFNTLHIHYHTMQQGNNEIIRGEFISQPGGAFENSSQIIIRYMTTGAITIEINSTKFSKLRIPWYLIFRMFGMTGDDSIIEQVVFDLESNSLVNTFMIEILEKSIHVLDPIFQPVQHELNREKIIQFLSEKVSKFVSNPSAYKSDENAVQYLNERQLTILDKILLPHMGQTADTRVRKLRFLGLLIHKILLVIMNVFPPTDRDSYRTKRVHGSGVSLAKAFKAIFNTSVIAPIINGFKELLKQTAFEELTQRNIIEAFSAALSKNTASDLNRSMEQSIISGNKTIMVRQRPIVNRVSTQSLERKNLLNTISALRTVNTHNTTNASKQTERADMMRRVHASYPGYICVAQSADTGEKVGMSKQLAITANVCTAGEVLSLKQRLLSDPAIQQLADVSNKDIVRKGLARVFINGEWIGCCTNAFELAQRYRMLRREGKIVHPHTTIYWDSMVDEVEFWLDVGRLTRPLLIVDNNIEKYNQACYKAAEARKKGDKDWEKHKIPFVQNTRFTSQMAKDILAGTLTLEDLVAQGICEFITPEEAENCLVAFSIIELRKHKHDVTRRFTHVDVPQAILGLAALVSPYANCTQPARVTYETNQGRQTGGWYCFSWPYRVDMNRFFQFYNEMPLVKTIAHNYVIPNGLNTIVAYMIYGGYNQEDSVIVSQSFIDRGGFAGTFYREEKVELESDIESFGKPDPLITKNLKPGANYEKLVDGFVPVGTVVKKGDIIIGKVAKIRGEKDELNKYIDRSVMYGFDEPAVVDAVMRPHGPNDEIFGLMRLRYERNLNIGDKMSSRSGNKGIAALALPTSDMPFTEDGLQPDLIVNPHSHPSRMTNGQMIETTVGLANALQGVVTDGTAFLPINVQLLSERLAQEGLRFNGCQKMFNGQTGEYFDAAIFIGPTYHQRLQKFVLDDRYAVASYGPTDALTGQPLDGKRSHGGLRLGEMEHWVLTAQGAMQTIIEKSHDDSDGCISYVCRNCGEPAIYNASHPIYKCMNCDVQADIGMVDSRRSSIVFQHEMRAANVNITSVLSPRVFQPA.

The C4-type zinc-finger motif lies at 1180-1201 (CRNCGEPAIYNASHPIYKCMNC).

This sequence belongs to the RNA polymerase beta chain family. Part of the viral DNA-directed RNA polymerase that consists of 8 polII-like subunits (RPB1, RPB2, RPB3, RPB5, RPB6, RPB7, RPB9, RPB10), a capping enzyme and a termination factor.

The protein resides in the host cytoplasm. Its subcellular location is the virion. The catalysed reaction is RNA(n) + a ribonucleoside 5'-triphosphate = RNA(n+1) + diphosphate. Functionally, catalytic component of the DNA-directed RNA polymerase (RNAP) that catalyzes the transcription in the cytoplasm of viral DNA into RNA using the four ribonucleoside triphosphates as substrates. Forms the polymerase active center together with RPB1. Part of the core element with the central large cleft, the clamp element that moves to open and close the cleft and the jaws that are thought to grab the incoming DNA template. This Ornithodoros (relapsing fever ticks) protein is DNA-directed RNA polymerase RPB2 homolog.